The sequence spans 100 residues: Urease subunit gamma (100 aa).

This sequence belongs to the urease gamma subunit family. Heterotrimer of UreA (gamma), UreB (beta) and UreC (alpha) subunits. Three heterotrimers associate to form the active enzyme.

It is found in the cytoplasm. The enzyme catalyses urea + 2 H2O + H(+) = hydrogencarbonate + 2 NH4(+). The protein operates within nitrogen metabolism; urea degradation; CO(2) and NH(3) from urea (urease route): step 1/1. The chain is Urease subunit gamma from Methylocella silvestris (strain DSM 15510 / CIP 108128 / LMG 27833 / NCIMB 13906 / BL2).